Reading from the N-terminus, the 118-residue chain is Protein TusC (118 aa).

The protein belongs to the DsrF/TusC family. In terms of assembly, heterohexamer, formed by a dimer of trimers. The hexameric TusBCD complex contains 2 copies each of TusB, TusC and TusD. The TusBCD complex interacts with TusE.

The protein localises to the cytoplasm. In terms of biological role, part of a sulfur-relay system required for 2-thiolation of 5-methylaminomethyl-2-thiouridine (mnm(5)s(2)U) at tRNA wobble positions. The polypeptide is Protein TusC (Salmonella typhimurium (strain LT2 / SGSC1412 / ATCC 700720)).